A 221-amino-acid polypeptide reads, in one-letter code: Germin-like protein 8-2 (221 aa).

An N-terminal signal peptide occupies residues 1–24 (MASSSFSFLLVAALLGLASWKAIA). Residues cysteine 34 and cysteine 49 are joined by a disulfide bond. N-linked (GlcNAc...) asparagine glycans are attached at residues asparagine 54 and asparagine 79. One can recognise a Cupin type-1 domain in the interval 64 to 215 (AMLDKPRDTN…AFQVDKKIID (152 aa)). Mn(2+) contacts are provided by histidine 112, histidine 114, glutamate 119, and histidine 160.

The protein belongs to the germin family. In terms of assembly, oligomer (believed to be a pentamer but probably hexamer).

It is found in the secreted. It localises to the extracellular space. The protein localises to the apoplast. In terms of biological role, plays a role in broad-spectrum disease resistance. Probably has no oxalate oxidase activity even if the active site is conserved. The polypeptide is Germin-like protein 8-2 (GER3) (Oryza sativa subsp. japonica (Rice)).